We begin with the raw amino-acid sequence, 530 residues long: GMP synthase [glutamine-hydrolyzing] (530 aa).

The 190-residue stretch at 18 to 207 (TILVLDFGSQ…AVDICQAKTN (190 aa)) folds into the Glutamine amidotransferase type-1 domain. The active-site Nucleophile is the Cys94. Residues His181 and Glu183 contribute to the active site. One can recognise a GMPS ATP-PPase domain in the interval 208–405 (WSMENFIDTE…LGVPEDLVWR (198 aa)). 236-242 (SGGVDST) contacts ATP. Arg309, Asp467, Lys522, and Glu528 together coordinate XMP.

As to quaternary structure, homodimer. Mg(2+) is required as a cofactor.

The protein localises to the cytoplasm. The protein resides in the cytosol. The enzyme catalyses XMP + L-glutamine + ATP + H2O = GMP + L-glutamate + AMP + diphosphate + 2 H(+). It participates in purine metabolism; GMP biosynthesis; GMP from XMP (L-Gln route): step 1/1. Its function is as follows. Catalyzes the conversion of xanthine monophosphate (XMP) to GMP in the presence of glutamine and ATP through an adenyl-XMP intermediate. This Candida albicans (strain SC5314 / ATCC MYA-2876) (Yeast) protein is GMP synthase [glutamine-hydrolyzing] (GUA1).